A 266-amino-acid polypeptide reads, in one-letter code: Indole-3-glycerol phosphate synthase (266 aa).

Belongs to the TrpC family.

It carries out the reaction 1-(2-carboxyphenylamino)-1-deoxy-D-ribulose 5-phosphate + H(+) = (1S,2R)-1-C-(indol-3-yl)glycerol 3-phosphate + CO2 + H2O. Its pathway is amino-acid biosynthesis; L-tryptophan biosynthesis; L-tryptophan from chorismate: step 4/5. The polypeptide is Indole-3-glycerol phosphate synthase (Paracidovorax citrulli (strain AAC00-1) (Acidovorax citrulli)).